Here is a 471-residue protein sequence, read N- to C-terminus: G2/mitotic-specific cyclin-1 (471 aa).

The protein belongs to the cyclin family. Cyclin AB subfamily.

Functionally, essential for the control of the cell cycle at the G2/M (mitosis) transition. Interacts with the CDC2 protein kinase to form MPF. G2/M cyclins accumulate steadily during G2 and are abruptly destroyed at mitosis. This chain is G2/mitotic-specific cyclin-1 (CLB1), found in Saccharomyces cerevisiae (strain ATCC 204508 / S288c) (Baker's yeast).